The sequence spans 137 residues: Sch210972 biosynthesis cluster protein E (137 aa).

A compositionally biased stretch (polar residues) spans 1-12 (MTKYTSVNSSLP). A disordered region spans residues 1–137 (MTKYTSVNSS…ASTIRPPCCG (137 aa)). Residues 15-27 (PRQTTPTRPATQT) are compositionally biased toward low complexity. The span at 51–71 (GSLNGSPTLRTTLDTSLSGTR) shows a compositional bias: polar residues. The segment covering 94 to 109 (DEDHPHDPGPDSDAKK) has biased composition (basic and acidic residues).

It participates in secondary metabolite biosynthesis. Its function is as follows. Part of the gene cluster that mediates the biosynthesis of the tetramic acid Sch210972, a potential anti-HIV fungal natural product that contains a decalin core. The PKS module of cghG together with the enoylreductase cghC catalyze the formation of the polyketide unit which is then conjugated to 4-hydroxyl-4-methyl glutamate (HMG) by the condensation domain of the cghG NRPS module. One unique structural feature of Sch210972 is the tetramic acid motif proposed to be derived from the non-proteinogenic amino acid HMG, by a Dieckmann-type condensation catalyzed by the reductase domain of cghG. The aldolase cghB catalyzes the aldol condensation of 2 molecules of pyruvic acid to yield the intermediate 4-hydroxyl-4-methyl-2-oxoglutarate (HMOG), which can then be stereoselectively transaminated by an unidentified enzyme to form HMG. The Diels-Alderase cghA then uses the Dieckmann product released by cghG as substrate and catalyzes the Diels-Alder cycloaddition to form the decalin ring of Sch210972. CghA also suppresses the nonenzymatic formation of the alternative stereoisomer. This Chaetomium globosum (strain ATCC 6205 / CBS 148.51 / DSM 1962 / NBRC 6347 / NRRL 1970) (Soil fungus) protein is Sch210972 biosynthesis cluster protein E.